We begin with the raw amino-acid sequence, 151 residues long: SsrA-binding protein (151 aa).

The protein belongs to the SmpB family.

It is found in the cytoplasm. Functionally, required for rescue of stalled ribosomes mediated by trans-translation. Binds to transfer-messenger RNA (tmRNA), required for stable association of tmRNA with ribosomes. tmRNA and SmpB together mimic tRNA shape, replacing the anticodon stem-loop with SmpB. tmRNA is encoded by the ssrA gene; the 2 termini fold to resemble tRNA(Ala) and it encodes a 'tag peptide', a short internal open reading frame. During trans-translation Ala-aminoacylated tmRNA acts like a tRNA, entering the A-site of stalled ribosomes, displacing the stalled mRNA. The ribosome then switches to translate the ORF on the tmRNA; the nascent peptide is terminated with the 'tag peptide' encoded by the tmRNA and targeted for degradation. The ribosome is freed to recommence translation, which seems to be the essential function of trans-translation. The protein is SsrA-binding protein of Campylobacter fetus subsp. fetus (strain 82-40).